A 185-amino-acid chain; its full sequence is Prorelaxin 1 (185 aa).

Residues 1–22 (MSSRFLLQLLGFWLLLSQPCRT) form the signal peptide. Intrachain disulfides connect C36–C171, C48–C185, and C170–C175. Residues 58-156 (SQEEPALLAR…LKYLQSDTHS (99 aa)) constitute a propeptide, connecting peptide. The interval 135 to 161 (RLGEAEDGSPPGLKYLQSDTHSRKKRE) is disordered.

This sequence belongs to the insulin family. As to quaternary structure, heterodimer of a B chain and an A chain linked by two disulfide bonds.

Its subcellular location is the secreted. Relaxin is an ovarian hormone that acts with estrogen to produce dilatation of the birth canal in many mammals. This chain is Prorelaxin 1 (Rln1), found in Mus musculus (Mouse).